The following is a 217-amino-acid chain: Peptide methionine sulfoxide reductase MsrA (217 aa).

Cysteine 54 is a catalytic residue.

Belongs to the MsrA Met sulfoxide reductase family.

It carries out the reaction L-methionyl-[protein] + [thioredoxin]-disulfide + H2O = L-methionyl-(S)-S-oxide-[protein] + [thioredoxin]-dithiol. The enzyme catalyses [thioredoxin]-disulfide + L-methionine + H2O = L-methionine (S)-S-oxide + [thioredoxin]-dithiol. Has an important function as a repair enzyme for proteins that have been inactivated by oxidation. Catalyzes the reversible oxidation-reduction of methionine sulfoxide in proteins to methionine. The chain is Peptide methionine sulfoxide reductase MsrA from Maricaulis maris (strain MCS10) (Caulobacter maris).